The chain runs to 308 residues: MKPRIAYRPLHGILLLDKPAGLSSNNALQAARRLLRAEKGGHTGSLDPLATGLLPLCFGEATKIAGLLLGSAKAYDAEIVLGVTTDTDDADGEPLRERAVPDVSEADLQVALAAFIGRIQQQAPIYSALKQGGEPLYAKARRGEVIDAPVREVEVQAIEVLGYSAPRLTLRVTCGSGTYIRSLARDLGEVLGCGAHIASLRRLWVEPFRAPQMITLEGLATALEAGAEAQTVLLPIEAGLADFARIVLDAALAARFRMGQRLRDAAFPTGQVAVFGPDGSPSGLGLVDADGRLSPQRLFNGLNEISVC.

D47 serves as the catalytic Nucleophile.

The protein belongs to the pseudouridine synthase TruB family. Type 1 subfamily.

It catalyses the reaction uridine(55) in tRNA = pseudouridine(55) in tRNA. Responsible for synthesis of pseudouridine from uracil-55 in the psi GC loop of transfer RNAs. This Xanthomonas oryzae pv. oryzae (strain MAFF 311018) protein is tRNA pseudouridine synthase B.